We begin with the raw amino-acid sequence, 366 residues long: G-protein coupled receptor 183-B (366 aa).

Over 1–24 (MMSPDLDLNFSSNCNLYDHRPVAR) the chain is Extracellular. N9 is a glycosylation site (N-linked (GlcNAc...) asparagine). The helical transmembrane segment at 25 to 50 (VLIPLVYSIICPVGLLGNALALHVVI) threads the bilayer. Topologically, residues 51–70 (SSTTKINSITLYSANLAVSD) are cytoplasmic. The helical transmembrane segment at 71–88 (ILFCLSLPLRAVYYGLGF) threads the bilayer. Over 89 to 98 (HWPMGEVLCK) the chain is Extracellular. C97 and C175 are oxidised to a cystine. The chain crosses the membrane as a helical span at residues 99 to 120 (AIALLFYLNCYAGVNFMTCLAV). Residues 121 to 142 (DRFVALVFPARLAKLRKAKNVR) lie on the Cytoplasmic side of the membrane. The helical transmembrane segment at 143 to 161 (FVCLAIWLLVLAQTLPLLT) threads the bilayer. Residues 162-187 (IGLTKTEPDSSITCMEYPNFEGVFKG) are Extracellular-facing. Residues 188 to 210 (LPYMLIVAVVLGFGIPVMTIIAC) traverse the membrane as a helical segment. The Cytoplasmic segment spans residues 211-236 (YSILTHKLHQAAKSNQLTERSGKTKK). Residues 237 to 260 (ARGVIAGVVFVFVVCFSPYHIDIL) form a helical membrane-spanning segment. Residues 261–280 (QYMIRKLLYETDCKELQSFQ) lie on the Extracellular side of the membrane. A helical transmembrane segment spans residues 281-305 (ISLHITVCLMNLNSCLDPFVYFFAC). The Cytoplasmic portion of the chain corresponds to 306–366 (KGYKQKVMRM…QQICYQPSAT (61 aa)).

It belongs to the G-protein coupled receptor 1 family.

It localises to the cell membrane. Its function is as follows. Probable receptor for oxysterols that plays a central role during humoral immunity. Promotes activated B-cell localization in the outer follicle and interfollicular regions. The protein is G-protein coupled receptor 183-B (gpr183b) of Danio rerio (Zebrafish).